A 1012-amino-acid polypeptide reads, in one-letter code: DNA polymerase catalytic subunit (1012 aa).

Belongs to the DNA polymerase type-B family.

It is found in the host nucleus. It carries out the reaction DNA(n) + a 2'-deoxyribonucleoside 5'-triphosphate = DNA(n+1) + diphosphate. Replicates viral genomic DNA. The sequence is that of DNA polymerase catalytic subunit (U38) from Human herpesvirus 6B (strain Z29) (HHV-6 variant B).